The primary structure comprises 236 residues: Purine nucleoside phosphorylase DeoD-type (236 aa).

His4 serves as a coordination point for a purine D-ribonucleoside. Residues Gly20, Arg24, Arg43, and 87-90 (RVGT) each bind phosphate. Residues 179-181 (EME) and 203-204 (SD) each bind a purine D-ribonucleoside. The active-site Proton donor is Asp204.

Belongs to the PNP/UDP phosphorylase family. As to quaternary structure, homohexamer; trimer of homodimers.

The catalysed reaction is a purine D-ribonucleoside + phosphate = a purine nucleobase + alpha-D-ribose 1-phosphate. It catalyses the reaction a purine 2'-deoxy-D-ribonucleoside + phosphate = a purine nucleobase + 2-deoxy-alpha-D-ribose 1-phosphate. Catalyzes the reversible phosphorolytic breakdown of the N-glycosidic bond in the beta-(deoxy)ribonucleoside molecules, with the formation of the corresponding free purine bases and pentose-1-phosphate. This is Purine nucleoside phosphorylase DeoD-type from Streptococcus pneumoniae (strain CGSP14).